A 130-amino-acid chain; its full sequence is MSMQDPISDMLTRVRNGQAANKVAVKMPSSKLKVAIAALLKAEGYIVDFAVEGEAKPELEVTLKYFQAKPVIEQLKRVSRPGLRVYKKKDELPSVMGGLGIAIVSTSKGLMSDRAARKAGLGGEIICYVA.

Belongs to the universal ribosomal protein uS8 family. As to quaternary structure, part of the 30S ribosomal subunit. Contacts proteins S5 and S12.

In terms of biological role, one of the primary rRNA binding proteins, it binds directly to 16S rRNA central domain where it helps coordinate assembly of the platform of the 30S subunit. The sequence is that of Small ribosomal subunit protein uS8 from Vibrio parahaemolyticus serotype O3:K6 (strain RIMD 2210633).